The following is a 180-amino-acid chain: D(1A) dopamine receptor (180 aa).

A helical membrane pass occupies residues 1–10 (NTLLVCAAVI). The Cytoplasmic segment spans residues 11-21 (RFRHLRSKVTN). Residues 22 to 48 (FFVISLAVSDLLVAVLVMPWKAVAEIA) form a helical membrane-spanning segment. Over 49–57 (GFWPFGSFC) the chain is Extracellular. Cysteines 57 and 147 form a disulfide. A helical transmembrane segment spans residues 58-80 (NIWVAFDIMCSTASILNLCVISV). The Cytoplasmic portion of the chain corresponds to 81–99 (DRYWAISSPFRYERKMTPK). The chain crosses the membrane as a helical span at residues 100 to 124 (AAFILIGVAWTLSVLISFIPVQLSW). At 125–153 (HKAKPTSPPDGNATSLDETVDNCDSSLSR) the chain is on the extracellular side. An N-linked (GlcNAc...) asparagine glycan is attached at N136. Residues 154 to 179 (TYSISSSLVNFYNPVAIMXVTYTRIH) traverse the membrane as a helical segment. R180 is a topological domain (cytoplasmic).

Belongs to the G-protein coupled receptor 1 family. In terms of assembly, interacts with DNAJC14 via its C-terminus. Interacts with DRD2. Interacts with DORIP1.

The protein resides in the cell membrane. It is found in the endoplasmic reticulum membrane. The protein localises to the cell projection. It localises to the cilium membrane. Its function is as follows. Dopamine receptor whose activity is mediated by G proteins which activate adenylyl cyclase. The polypeptide is D(1A) dopamine receptor (DRD1) (Oryctolagus cuniculus (Rabbit)).